The primary structure comprises 81 residues: Large ribosomal subunit protein bL31B (81 aa).

The protein belongs to the bacterial ribosomal protein bL31 family. Type B subfamily. Part of the 50S ribosomal subunit.

The sequence is that of Large ribosomal subunit protein bL31B from Lactobacillus acidophilus (strain ATCC 700396 / NCK56 / N2 / NCFM).